Consider the following 96-residue polypeptide: Co-chaperonin GroES (96 aa).

It belongs to the GroES chaperonin family. Heptamer of 7 subunits arranged in a ring. Interacts with the chaperonin GroEL.

It is found in the cytoplasm. Together with the chaperonin GroEL, plays an essential role in assisting protein folding. The GroEL-GroES system forms a nano-cage that allows encapsulation of the non-native substrate proteins and provides a physical environment optimized to promote and accelerate protein folding. GroES binds to the apical surface of the GroEL ring, thereby capping the opening of the GroEL channel. The polypeptide is Co-chaperonin GroES (Myxococcus xanthus (strain DK1622)).